Reading from the N-terminus, the 126-residue chain is Holo-[acyl-carrier-protein] synthase (126 aa).

Residues Asp-9 and Glu-58 each contribute to the Mg(2+) site.

This sequence belongs to the P-Pant transferase superfamily. AcpS family. It depends on Mg(2+) as a cofactor.

It is found in the cytoplasm. The catalysed reaction is apo-[ACP] + CoA = holo-[ACP] + adenosine 3',5'-bisphosphate + H(+). Transfers the 4'-phosphopantetheine moiety from coenzyme A to a Ser of acyl-carrier-protein. This chain is Holo-[acyl-carrier-protein] synthase, found in Vibrio parahaemolyticus serotype O3:K6 (strain RIMD 2210633).